A 477-amino-acid polypeptide reads, in one-letter code: MGPQAAAGRMILLVVLMLSAKVGSGALTSTEDPEPPSVPVPTNVLIKSYNLNPVVCWEYQNMSQTPIFTVQVKVYSGSWTDSCTNISDHCCNIYEQIMYPDVSAWARVKAKVGQKESDYARSKEFLMCLKGKVGPPGLEIRRKKEEQLSVLVFHPEVVVNGESQGTMFGDGSTCYTFDYTVYVEHNRSGEILHTKHTVEKEECNETLCELNISVSTLDSRYCISVDGISSFWQVRTEKSKDVCIPPFHDDRKDSIWILVVAPLTVFTVVILVFAYWYTKKNSFKRKSIMLPKSLLSVVKSATLETKPESKYSLVTPHQPAVLESETVICEEPLSTVTAPDSPEAAEQEELSKETKALEAGGSTSAMTPDSPPTPTQRRSFSLLSSNQSGPCSLTAYHSRNGSDSGLVGSGSSISDLESLPNNNSETKMAEHDPPPVRKAPMASGYDKPHMLVDVLVDVGGKESLMGYRLTGEAQELS.

An N-terminal signal peptide occupies residues 1–25; it reads MGPQAAAGRMILLVVLMLSAKVGSG. Residues 26–254 are Extracellular-facing; that stretch reads ALTSTEDPEP…PPFHDDRKDS (229 aa). 2 N-linked (GlcNAc...) asparagine glycosylation sites follow: Asn-61 and Asn-85. 4 disulfide bridges follow: Cys-83–Cys-91, Cys-128–Cys-174, Cys-203–Cys-208, and Cys-222–Cys-243. Residues 255 to 275 traverse the membrane as a helical segment; the sequence is IWILVVAPLTVFTVVILVFAY. Topologically, residues 276–477 are cytoplasmic; sequence WYTKKNSFKR…RLTGEAQELS (202 aa). Disordered regions lie at residues 335-386 and 402-446; these read TVTA…LSSN and SDSG…SGYD. Position 362 is a phosphoserine (Ser-362). Thr-367 carries the phosphothreonine modification. A Phosphoserine modification is found at Ser-370. A phosphothreonine mark is found at Thr-373 and Thr-375. Positions 375-386 are enriched in polar residues; the sequence is TQRRSFSLLSSN. Phosphoserine occurs at positions 379 and 402. Over residues 402–416 the composition is skewed to low complexity; it reads SDSGLVGSGSSISDL. Position 445 is a phosphotyrosine (Tyr-445).

It belongs to the type II cytokine receptor family. Monomer. Heterodimer with IFNGR2, to form the IFNG receptor complex. Interacts with JAK1. Interacts (when phosphorylated) with STAT1. Interacts with SOCS1. Phosphorylated at Ser/Thr residues. Phosphorylation of Tyr-445 is required for IFNG receptor signal transduction. Influenza virus infection leads to phosphorylation in a CSNK1A1-dependent manner. In terms of processing, ubiquitinated after phosphorylation in a CSNK1A1-dependent manner, leading to the lysosome-dependent degradation. Proteasomally degraded through 'Lys-48'-mediated ubiquitination. Ubiquitination is necessary for efficient IFNGR1 signaling.

It is found in the cell membrane. Its function is as follows. Receptor subunit for interferon gamma/INFG that plays crucial roles in antimicrobial, antiviral, and antitumor responses by activating effector immune cells and enhancing antigen presentation (, PubMed:20926559, PubMed:27286456). Associates with transmembrane accessory factor IFNGR2 to form a functional receptor. Upon ligand binding, the intracellular domain of IFNGR1 opens out to allow association of downstream signaling components JAK1 and JAK2. In turn, activated JAK1 phosphorylates IFNGR1 to form a docking site for STAT1. Subsequent phosphorylation of STAT1 leads to its dimerization, translocation to the nucleus, and stimulation of target gene transcription. STAT3 can also be activated in a similar manner although activation seems weaker. IFNGR1 intracellular domain phosphorylation also provides a docking site for SOCS1 that regulates the JAK-STAT pathway by competing with STAT1 binding to IFNGR1. In Mus musculus (Mouse), this protein is Interferon gamma receptor 1.